Reading from the N-terminus, the 329-residue chain is tRNA N6-adenosine threonylcarbamoyltransferase (329 aa).

Residues H107 and H111 each contribute to the Fe cation site. Substrate contacts are provided by residues 129 to 133, D162, G175, and N268; that span reads LVSGG. D296 lines the Fe cation pocket.

It belongs to the KAE1 / TsaD family. Fe(2+) serves as cofactor.

It localises to the cytoplasm. The enzyme catalyses L-threonylcarbamoyladenylate + adenosine(37) in tRNA = N(6)-L-threonylcarbamoyladenosine(37) in tRNA + AMP + H(+). Required for the formation of a threonylcarbamoyl group on adenosine at position 37 (t(6)A37) in tRNAs that read codons beginning with adenine. Is involved in the transfer of the threonylcarbamoyl moiety of threonylcarbamoyl-AMP (TC-AMP) to the N6 group of A37, together with TsaE and TsaB. TsaD likely plays a direct catalytic role in this reaction. In Nitratiruptor sp. (strain SB155-2), this protein is tRNA N6-adenosine threonylcarbamoyltransferase.